A 375-amino-acid polypeptide reads, in one-letter code: Alcohol dehydrogenase B (375 aa).

Zn(2+) is bound by residues C40, H62, C92, C95, C98, C106, and C169.

It belongs to the zinc-containing alcohol dehydrogenase family. Requires Zn(2+) as cofactor.

Its subcellular location is the cytoplasm. The enzyme catalyses a primary alcohol + NAD(+) = an aldehyde + NADH + H(+). It catalyses the reaction a secondary alcohol + NAD(+) = a ketone + NADH + H(+). This Mycobacterium bovis (strain ATCC BAA-935 / AF2122/97) protein is Alcohol dehydrogenase B (adhB).